The sequence spans 256 residues: Spore coat polysaccharide biosynthesis protein SpsA (256 aa).

An intrachain disulfide couples C155 to C243. The active site involves D191.

This sequence belongs to the glycosyltransferase 2 family. Monomer in solution.

The protein operates within spore coat biogenesis; spore coat polysaccharide biosynthesis. Its function is as follows. Glycosyltransferase implicated in the synthesis of the spore coat. This chain is Spore coat polysaccharide biosynthesis protein SpsA (spsA), found in Bacillus subtilis (strain 168).